The following is an 875-amino-acid chain: Receptor-like protein 33 (875 aa).

The first 23 residues, 1–23 (MSLIPITFYFLFLFFSNFRGVFA), serve as a signal peptide directing secretion. Residues 24–822 (VPNIHLCHFE…GESETLESEQ (799 aa)) are Extracellular-facing. Residues Asn65, Asn103, Asn133, Asn146, and Asn181 are each glycosylated (N-linked (GlcNAc...) asparagine). LRR repeat units follow at residues 110-133 (FHFL…SIGN), 134-157 (LSHL…SLGN), 159-182 (FHLT…LGNL), 183-205 (SYLT…SFGS), 206-230 (LNQL…VINL), 231-254 (TKLS…ITSL), 256-278 (ILES…LFTI), 280-302 (SITL…NISS), 303-327 (PSNL…ISRL), and 329-351 (NLRT…IFSH). 2 N-linked (GlcNAc...) asparagine glycosylation sites follow: Asn229 and Asn250. Asn299 carries an N-linked (GlcNAc...) asparagine glycan. One copy of the LRR 11; degenerate repeat lies at 352 to 377 (LKLLGNLYLSHSNTTTTIDLNAVLSC). Asn364, Asn395, and Asn411 each carry an N-linked (GlcNAc...) asparagine glycan. LRR repeat units follow at residues 378–401 (FKML…SVSD), 404–427 (LGLI…LRTQ), 428–451 (RQMR…LLLQ), 455–477 (MHIS…TVVP), 479–502 (PSMK…ICSL), 503–528 (RSLI…KFKS), 530–549 (LSDL…KTII), 550–573 (KSLR…LIHF), 575–596 (TLEV…WLSS), 597–619 (LKKL…KTRF), 620–643 (PKLR…CFVE), 686–710 (LKIY…IGLL), 711–734 (KELH…MGNL), 735–758 (RELE…LGNL), and 760–783 (YLAY…QFRT). Residues Asn490 and Asn514 are each glycosylated (N-linked (GlcNAc...) asparagine). An N-linked (GlcNAc...) asparagine glycan is attached at Asn587. A glycan (N-linked (GlcNAc...) asparagine) is linked at Asn633. N-linked (GlcNAc...) asparagine glycans are attached at residues Asn717, Asn757, and Asn765. A helical membrane pass occupies residues 823–843 (VLSWIAAAIGFTPGIVLGLTI). At 844–875 (GHIVLSSKPRWFFKVLYINNSRRRRRTRSEKS) the chain is on the cytoplasmic side.

It belongs to the RLP family.

The protein resides in the cell membrane. This is Receptor-like protein 33 from Arabidopsis thaliana (Mouse-ear cress).